Consider the following 1060-residue polypeptide: Valine--tRNA ligase, mitochondrial (1060 aa).

A mitochondrion-targeting transit peptide spans 1–15 (MPHLPLASFRPPLWG). Residues 25–50 (PQALCTQPEPHGSPVSRRNREAKQKR) form a disordered region. The 'HIGH' region signature appears at 146-156 (PNVTGSLHIGH). An N6-acetyllysine modification is found at Lys548. Positions 659–663 (KMSKS) match the 'KMSKS' region motif. Position 662 (Lys662) interacts with ATP.

The protein belongs to the class-I aminoacyl-tRNA synthetase family.

It localises to the mitochondrion. The enzyme catalyses tRNA(Val) + L-valine + ATP = L-valyl-tRNA(Val) + AMP + diphosphate. Its function is as follows. Catalyzes the attachment of valine to tRNA(Val) in a two-step reaction: valine is first activated by ATP to form Val-AMP and then transferred to the acceptor end of tRNA(Val). The protein is Valine--tRNA ligase, mitochondrial (Vars2) of Mus musculus (Mouse).